The following is a 662-amino-acid chain: Methionine--tRNA ligase (662 aa).

A 'HIGH' region motif is present at residues 14–24 (YYPSGKLHLGS). A 'KMSKS' region motif is present at residues 308 to 312 (KMSKS). Lys311 is a binding site for ATP. The region spanning 559-662 (DFEKIELKVA…DDVPAGSLIG (104 aa)) is the tRNA-binding domain.

The protein belongs to the class-I aminoacyl-tRNA synthetase family. MetG type 2B subfamily. In terms of assembly, homodimer.

The protein resides in the cytoplasm. It carries out the reaction tRNA(Met) + L-methionine + ATP = L-methionyl-tRNA(Met) + AMP + diphosphate. Is required not only for elongation of protein synthesis but also for the initiation of all mRNA translation through initiator tRNA(fMet) aminoacylation. This chain is Methionine--tRNA ligase (metG), found in Lactococcus lactis subsp. lactis (strain IL1403) (Streptococcus lactis).